Here is a 459-residue protein sequence, read N- to C-terminus: Glycosyl hydrolase family 109 protein (459 aa).

Residues 1 to 31 constitute a signal peptide (tat-type signal); it reads MHNIHRRHFLKAAGAVTAGLITANITASTHA. NAD(+) is bound by residues 64-65, D86, 135-138, 155-156, and N184; these read ER, WEWH, and EV. Residues Y213, R232, 244–247, and Y326 contribute to the substrate site; that span reads YPTH. Residue Y244 participates in NAD(+) binding.

The protein belongs to the Gfo/Idh/MocA family. Glycosyl hydrolase 109 subfamily. NAD(+) serves as cofactor. In terms of processing, predicted to be exported by the Tat system. The position of the signal peptide cleavage has not been experimentally proven.

Its function is as follows. Glycosidase. The sequence is that of Glycosyl hydrolase family 109 protein from Shewanella putrefaciens (strain CN-32 / ATCC BAA-453).